The following is a 107-amino-acid chain: Phosphoribosyl-ATP pyrophosphatase (107 aa).

The protein belongs to the PRA-PH family.

It localises to the cytoplasm. It carries out the reaction 1-(5-phospho-beta-D-ribosyl)-ATP + H2O = 1-(5-phospho-beta-D-ribosyl)-5'-AMP + diphosphate + H(+). It functions in the pathway amino-acid biosynthesis; L-histidine biosynthesis; L-histidine from 5-phospho-alpha-D-ribose 1-diphosphate: step 2/9. This chain is Phosphoribosyl-ATP pyrophosphatase, found in Bacillus anthracis (strain A0248).